The sequence spans 307 residues: 4-hydroxythreonine-4-phosphate dehydrogenase (307 aa).

Substrate contacts are provided by histidine 126 and threonine 127. A divalent metal cation is bound by residues histidine 156, histidine 195, and histidine 251. Substrate-binding residues include lysine 259, asparagine 268, and arginine 277.

It belongs to the PdxA family. Homodimer. Requires Zn(2+) as cofactor. It depends on Mg(2+) as a cofactor. The cofactor is Co(2+).

The protein localises to the cytoplasm. It carries out the reaction 4-(phosphooxy)-L-threonine + NAD(+) = 3-amino-2-oxopropyl phosphate + CO2 + NADH. Its pathway is cofactor biosynthesis; pyridoxine 5'-phosphate biosynthesis; pyridoxine 5'-phosphate from D-erythrose 4-phosphate: step 4/5. Catalyzes the NAD(P)-dependent oxidation of 4-(phosphooxy)-L-threonine (HTP) into 2-amino-3-oxo-4-(phosphooxy)butyric acid which spontaneously decarboxylates to form 3-amino-2-oxopropyl phosphate (AHAP). The sequence is that of 4-hydroxythreonine-4-phosphate dehydrogenase from Helicobacter pylori (strain G27).